Consider the following 738-residue polypeptide: Melanotransferrin (738 aa).

Positions 1 to 19 (MRGPSGALWLLLALRTVLG) are cleaved as a signal peptide. Residues 20-30 (GMEVRWCATSD) form an antigenic epitope region. 2 consecutive Transferrin-like domains span residues 23-357 (VRWC…GLLC) and 366-706 (LRWC…GMSS). 2 cysteine pairs are disulfide-bonded: Cys26/Cys63 and Cys36/Cys54. An N-linked (GlcNAc...) asparagine glycan is attached at Asn38. Positions 78 and 107 each coordinate Fe(3+). Intrachain disulfides connect Cys130/Cys216, Cys172/Cys189, Cys186/Cys199, and Cys257/Cys271. Thr132 contributes to the hydrogencarbonate binding site. Asn135 carries an N-linked (GlcNAc...) asparagine glycan. Residues Arg136, Val138, and Gly139 each contribute to the hydrogencarbonate site. Residue Tyr210 coordinates Fe(3+). Positions 279, 421, and 451 each coordinate Fe(3+). Ser462 carries the phosphoserine; by FAM20C modification. An N-linked (GlcNAc...) asparagine glycan is attached at Asn515. Fe(3+) is bound by residues Tyr556 and His625. Cys709 carries the GPI-anchor amidated cysteine lipid modification. Residues 710–738 (SGAAAPAPGAPLLPLLLPALAARLLPPAL) constitute a propeptide, removed in mature form.

Belongs to the transferrin family. Found predominantly in human melanomas and in certain fetal tissues; also found in liver, epithelium, umbilical chord, placenta and sweat gland ducts.

Its subcellular location is the cell membrane. Functionally, involved in iron cellular uptake. Seems to be internalized and then recycled back to the cell membrane. Binds a single atom of iron per subunit. Could also bind zinc. The chain is Melanotransferrin from Homo sapiens (Human).